Consider the following 102-residue polypeptide: Small ribosomal subunit protein uS10 (102 aa).

It belongs to the universal ribosomal protein uS10 family. As to quaternary structure, part of the 30S ribosomal subunit.

Involved in the binding of tRNA to the ribosomes. This Thermococcus gammatolerans (strain DSM 15229 / JCM 11827 / EJ3) protein is Small ribosomal subunit protein uS10.